We begin with the raw amino-acid sequence, 667 residues long: 1-deoxy-D-xylulose-5-phosphate synthase (667 aa).

Thiamine diphosphate-binding positions include His-73 and 113–115 (SHA). Mg(2+) is bound at residue Asp-145. Thiamine diphosphate is bound by residues 146–147 (GA), Asn-175, Tyr-297, and Glu-379. Asn-175 is a binding site for Mg(2+).

The protein belongs to the transketolase family. DXPS subfamily. As to quaternary structure, homodimer. It depends on Mg(2+) as a cofactor. Thiamine diphosphate serves as cofactor.

The catalysed reaction is D-glyceraldehyde 3-phosphate + pyruvate + H(+) = 1-deoxy-D-xylulose 5-phosphate + CO2. The protein operates within metabolic intermediate biosynthesis; 1-deoxy-D-xylulose 5-phosphate biosynthesis; 1-deoxy-D-xylulose 5-phosphate from D-glyceraldehyde 3-phosphate and pyruvate: step 1/1. Functionally, catalyzes the acyloin condensation reaction between C atoms 2 and 3 of pyruvate and glyceraldehyde 3-phosphate to yield 1-deoxy-D-xylulose-5-phosphate (DXP). In Kocuria rhizophila (strain ATCC 9341 / DSM 348 / NBRC 103217 / DC2201), this protein is 1-deoxy-D-xylulose-5-phosphate synthase.